Reading from the N-terminus, the 865-residue chain is DNA mismatch repair protein MutS (865 aa).

605–612 serves as a coordination point for ATP; sequence GPNMAGKS. A disordered region spans residues 814–833; it reads PEPLEAYKPKGNKQPLSDEE.

Belongs to the DNA mismatch repair MutS family.

In terms of biological role, this protein is involved in the repair of mismatches in DNA. It is possible that it carries out the mismatch recognition step. This protein has a weak ATPase activity. In Halalkalibacterium halodurans (strain ATCC BAA-125 / DSM 18197 / FERM 7344 / JCM 9153 / C-125) (Bacillus halodurans), this protein is DNA mismatch repair protein MutS.